The following is a 139-amino-acid chain: Small ribosomal subunit protein uS12 (139 aa).

The segment at 1-21 is disordered; it reads MSTVSQLIKKRRSSKTSKTKA. Over residues 8–18 the composition is skewed to basic residues; it reads IKKRRSSKTSK.

Belongs to the universal ribosomal protein uS12 family. In terms of assembly, part of the 30S ribosomal subunit. Contacts proteins S8 and S17. May interact with IF1 in the 30S initiation complex.

Its function is as follows. With S4 and S5 plays an important role in translational accuracy. Functionally, interacts with and stabilizes bases of the 16S rRNA that are involved in tRNA selection in the A site and with the mRNA backbone. Located at the interface of the 30S and 50S subunits, it traverses the body of the 30S subunit contacting proteins on the other side and probably holding the rRNA structure together. The combined cluster of proteins S8, S12 and S17 appears to hold together the shoulder and platform of the 30S subunit. This is Small ribosomal subunit protein uS12 from Onion yellows phytoplasma (strain OY-M).